The sequence spans 315 residues: Ribosomal RNA small subunit methyltransferase H (315 aa).

S-adenosyl-L-methionine contacts are provided by residues 37-39 (GGH), Asp-57, Phe-83, Asp-105, and Gln-112.

This sequence belongs to the methyltransferase superfamily. RsmH family.

It is found in the cytoplasm. The enzyme catalyses cytidine(1402) in 16S rRNA + S-adenosyl-L-methionine = N(4)-methylcytidine(1402) in 16S rRNA + S-adenosyl-L-homocysteine + H(+). Specifically methylates the N4 position of cytidine in position 1402 (C1402) of 16S rRNA. This chain is Ribosomal RNA small subunit methyltransferase H, found in Pseudomonas fluorescens (strain SBW25).